The chain runs to 340 residues: Extracellular matrix protein-binding protein emp (340 aa).

The N-terminal stretch at Met1–Ala26 is a signal peptide.

It is found in the cell surface. In terms of biological role, adhesin that binds to the host cell extracellular matrix proteins fibronectin, fibrinogen, collagen, and vitronectin. The protein is Extracellular matrix protein-binding protein emp (emp) of Staphylococcus aureus.